We begin with the raw amino-acid sequence, 367 residues long: MLLTINLKDSFLTFFSNLGFSNEFSKALWIPLPILLLIILAVVGVLVVVWLERKISAAVQQRIGPEYAGPLGVLQPLADGLKLAFKEDIIPSKGDVLLFTLGPAIVVIPIFLSYLIVPFGENLIVSNINLGIFFWITVSSVAPLGLLMSGYGSNNKYSFLGGLRATAQSLSYEIPLALCVLSICLLSDSLSTIDIVQKQSTYGILGWNIWRQPIGFIAFIIAALAECERLPFDLPEAEEELVAGYQTEYTGMKFGLFYIGSYVNLLVSALFASVLYLGGWSLPIPIEFLLNKMSLNASDSEVQVISAFLGIGMTLLKTYLFLFLSILTRWTMPRVRIDQLLDLGWKFLLPISLGNLLLTASLKIALL.

8 consecutive transmembrane segments (helical) span residues 29 to 49, 96 to 116, 128 to 148, 176 to 196, 204 to 224, 266 to 286, 304 to 324, and 347 to 367; these read WIPLPILLLIILAVVGVLVVV, VLLFTLGPAIVVIPIFLSYLI, INLGIFFWITVSSVAPLGLLM, LALCVLSICLLSDSLSTIDIV, ILGWNIWRQPIGFIAFIIAAL, LVSALFASVLYLGGWSLPIPI, VISAFLGIGMTLLKTYLFLFL, and FLLPISLGNLLLTASLKIALL.

The protein belongs to the complex I subunit 1 family. In terms of assembly, NDH is composed of at least 16 different subunits, 5 of which are encoded in the nucleus.

Its subcellular location is the plastid. It is found in the chloroplast thylakoid membrane. It catalyses the reaction a plastoquinone + NADH + (n+1) H(+)(in) = a plastoquinol + NAD(+) + n H(+)(out). The enzyme catalyses a plastoquinone + NADPH + (n+1) H(+)(in) = a plastoquinol + NADP(+) + n H(+)(out). In terms of biological role, NDH shuttles electrons from NAD(P)H:plastoquinone, via FMN and iron-sulfur (Fe-S) centers, to quinones in the photosynthetic chain and possibly in a chloroplast respiratory chain. The immediate electron acceptor for the enzyme in this species is believed to be plastoquinone. Couples the redox reaction to proton translocation, and thus conserves the redox energy in a proton gradient. This is NAD(P)H-quinone oxidoreductase subunit 1, chloroplastic from Mesostigma viride (Green alga).